We begin with the raw amino-acid sequence, 144 residues long: MVSKASRDQLRKYGAVSLASLLVAASIVAYRWWNAAPSIEVEKKLRRSVSRCVVVTQGIQNEDMIHDLLFEDTVMLLAPGCTAEGRLKSASRENAYKVISCTTWQSVWACVRHFRKHTLLVRTSEVPSGVPADIGGYVSDISDI.

Residues 13 to 35 form a helical membrane-spanning segment; it reads YGAVSLASLLVAASIVAYRWWNA.

It belongs to the peroxin-22 family.

Its subcellular location is the peroxisome membrane. Functionally, involved in peroxisome biogenesis. The protein is Peroxisome assembly protein 22 (PEX22) of Eremothecium gossypii (strain ATCC 10895 / CBS 109.51 / FGSC 9923 / NRRL Y-1056) (Yeast).